Consider the following 460-residue polypeptide: EPD1-interacting receptor-like cytoplasmic serine/threonine-protein kinase 5D (460 aa).

Residues 83-364 (FSSANFLGEG…DVVNILEPLL (282 aa)) enclose the Protein kinase domain. ATP-binding positions include 89-97 (LGEGGFGPV) and Lys118. A phosphotyrosine mark is found at Tyr163 and Tyr165. Asp213 acts as the Proton acceptor in catalysis.

It belongs to the protein kinase superfamily. Ser/Thr protein kinase family. In terms of assembly, interacts with the V.dahliae elicitor EPD1 (AC G2WWH6). In terms of processing, phosphorylated at Tyr-163 and Tyr-165 in the presence of pathogen-associated molecular patterns (PAMPs); this triggers the expression of pathogenesis-related genes. Mostly expressed in roots and, to a lesser extent, in leaves.

The protein localises to the cell membrane. The enzyme catalyses L-seryl-[protein] + ATP = O-phospho-L-seryl-[protein] + ADP + H(+). It catalyses the reaction L-threonyl-[protein] + ATP = O-phospho-L-threonyl-[protein] + ADP + H(+). Required for pathogen-associated molecular pattern (PAMP, e.g. chitin and flg22)-triggered immunity (PTI) involving reactive oxygen species (ROS) accumulation and triggering plant defense, including defense-related gene expression (e.g. PR1 and LOX). Ensures specific recognition of the EPD1 effector of Verticillium dahliae, resulting in a hypersensitive response known as effector-triggered immunity (ETI), characterized by the activation of programmed cell death to limit infection by the pathogen. Priming plants with the incompatible pathogen V.dahliae leads to an increased resistance to compatible pathogens, as a result of systemic acquired resistance (SAR). In Gossypium barbadense (Sea Island cotton), this protein is EPD1-interacting receptor-like cytoplasmic serine/threonine-protein kinase 5D.